The chain runs to 783 residues: ATP-dependent zinc metalloprotease FtsH (783 aa).

A compositionally biased stretch (low complexity) spans 1–16; it reads MSETPNTNEQNNPNNQ. The segment at 1 to 79 is disordered; that stretch reads MSETPNTNEQ…DKEEDFASRL (79 aa). Residues 1–86 lie on the Cytoplasmic side of the membrane; the sequence is MSETPNTNEQ…SRLNTRPPQR (86 aa). Positions 35 to 61 are enriched in basic and acidic residues; sequence MPERPERHNQADGAPKRPGDDDRKSER. The helical transmembrane segment at 87–107 threads the bilayer; sequence ASIITIIIIFLVAFFIGSQMM. Residues 108–233 lie on the Extracellular side of the membrane; the sequence is NMVHGEETDD…EYQVTLPSNV (126 aa). Residues 234-254 form a helical membrane-spanning segment; the sequence is TEILISVLPMLLFAGLLIYFF. The Cytoplasmic portion of the chain corresponds to 255–783; sequence SQMSKANNSQ…APQPPAAPQQ (529 aa). 325–332 lines the ATP pocket; sequence GPPGTGKT. H547 lines the Zn(2+) pocket. E548 is a catalytic residue. Zn(2+) contacts are provided by H551 and D623. A compositionally biased stretch (low complexity) spans 738–771; sequence EAAAKAADQAEQPQVEAEPVAQVATPAAPVAPAV. Positions 738–783 are disordered; it reads EAAAKAADQAEQPQVEAEPVAQVATPAAPVAPAVPEAPQPPAAPQQ. Over residues 772–783 the composition is skewed to pro residues; the sequence is PEAPQPPAAPQQ.

It in the central section; belongs to the AAA ATPase family. In the C-terminal section; belongs to the peptidase M41 family. As to quaternary structure, homohexamer. It depends on Zn(2+) as a cofactor.

The protein localises to the cell membrane. Acts as a processive, ATP-dependent zinc metallopeptidase for both cytoplasmic and membrane proteins. Plays a role in the quality control of integral membrane proteins. The sequence is that of ATP-dependent zinc metalloprotease FtsH from Slackia heliotrinireducens (strain ATCC 29202 / DSM 20476 / NCTC 11029 / RHS 1) (Peptococcus heliotrinreducens).